A 191-amino-acid chain; its full sequence is Small ribosomal subunit protein eS7y (191 aa).

The residue at position 1 (Met1) is an N-acetylmethionine. Residues 17 to 50 (TEFEEQVTQALFDLENTNQELKSELKDLYINQAV) are a coiled coil.

It belongs to the eukaryotic ribosomal protein eS7 family.

This is Small ribosomal subunit protein eS7y (RPS7B) from Arabidopsis thaliana (Mouse-ear cress).